Consider the following 511-residue polypeptide: 2-isopropylmalate synthase (511 aa).

The 264-residue stretch at 6–269 folds into the Pyruvate carboxyltransferase domain; sequence IIIFDTTLRD…YTDIKCENIS (264 aa). Residues Asp-15, His-203, His-205, and Asn-239 each coordinate Mn(2+). The segment at 394-511 is regulatory domain; it reads VLEKLSVISG…SLKVEERKMA (118 aa).

This sequence belongs to the alpha-IPM synthase/homocitrate synthase family. LeuA type 1 subfamily. As to quaternary structure, homodimer. It depends on Mn(2+) as a cofactor.

The protein localises to the cytoplasm. The enzyme catalyses 3-methyl-2-oxobutanoate + acetyl-CoA + H2O = (2S)-2-isopropylmalate + CoA + H(+). It functions in the pathway amino-acid biosynthesis; L-leucine biosynthesis; L-leucine from 3-methyl-2-oxobutanoate: step 1/4. Its function is as follows. Catalyzes the condensation of the acetyl group of acetyl-CoA with 3-methyl-2-oxobutanoate (2-ketoisovalerate) to form 3-carboxy-3-hydroxy-4-methylpentanoate (2-isopropylmalate). This Campylobacter jejuni subsp. doylei (strain ATCC BAA-1458 / RM4099 / 269.97) protein is 2-isopropylmalate synthase.